The primary structure comprises 41 residues: Large ribosomal subunit protein bL36 (41 aa).

The protein belongs to the bacterial ribosomal protein bL36 family.

This is Large ribosomal subunit protein bL36 from Mesorhizobium japonicum (strain LMG 29417 / CECT 9101 / MAFF 303099) (Mesorhizobium loti (strain MAFF 303099)).